The primary structure comprises 444 residues: 23S rRNA (uracil(1939)-C(5))-methyltransferase RlmD (444 aa).

A TRAM domain is found at 5–64 (KPKLNLTSQTARIVNLSHDGRGIARVNGKATFIQGALPGEVVEFQYTRIKKDFDEGKLLS). Positions 77, 83, 86, and 166 each coordinate [4Fe-4S] cluster. The S-adenosyl-L-methionine site is built by Q276, F305, N310, E326, N353, and D374. C400 acts as the Nucleophile in catalysis.

It belongs to the class I-like SAM-binding methyltransferase superfamily. RNA M5U methyltransferase family. RlmD subfamily.

It catalyses the reaction uridine(1939) in 23S rRNA + S-adenosyl-L-methionine = 5-methyluridine(1939) in 23S rRNA + S-adenosyl-L-homocysteine + H(+). Functionally, catalyzes the formation of 5-methyl-uridine at position 1939 (m5U1939) in 23S rRNA. In Legionella pneumophila (strain Corby), this protein is 23S rRNA (uracil(1939)-C(5))-methyltransferase RlmD.